The chain runs to 119 residues: Protein phosphatase EYA1 (119 aa).

It belongs to the HAD-like hydrolase superfamily. EYA family. Requires Mg(2+) as cofactor.

Its subcellular location is the cytoplasm. It is found in the nucleus. The catalysed reaction is O-phospho-L-tyrosyl-[protein] + H2O = L-tyrosyl-[protein] + phosphate. It carries out the reaction O-phospho-L-seryl-[protein] + H2O = L-seryl-[protein] + phosphate. The enzyme catalyses O-phospho-L-threonyl-[protein] + H2O = L-threonyl-[protein] + phosphate. Its function is as follows. Functions both as protein phosphatase and as transcriptional coactivator for SIX1, and probably also for other transcription factors of this family. Tyrosine phosphatase that dephosphorylates 'Tyr-142' of histone H2AX (H2AXY142ph) and promotes efficient DNA repair via the recruitment of DNA repair complexes containing MDC1. 'Tyr-142' phosphorylation of histone H2AX plays a central role in DNA repair and acts as a mark that distinguishes between apoptotic and repair responses to genotoxic stress. Its function as histone phosphatase may contribute to its function in transcription regulation during organogenesis. Also has phosphatase activity with proteins phosphorylated on Ser and Thr residues (in vitro). Required for normal embryonic development of the skeleton, kidneys and ears. This is Protein phosphatase EYA1 (EYA1) from Gallus gallus (Chicken).